The following is a 264-amino-acid chain: GATA transcription factor 2 (264 aa).

Low complexity predominate over residues 29–42 (SSSGGSTAATSSSS). Disordered regions lie at residues 29–57 (SSSG…HHLP) and 96–192 (NPLG…TPQW). Positions 101-110 (TMTSVKTETS) are enriched in polar residues. The Nuclear localization signal signature appears at 114 to 121 (KPRSKRSR). Residues 155–164 (SGGGGGGGGR) show a composition bias toward gly residues. Residues 175-229 (GGGMRRCTHCASEKTPQWRTGPLGPKTLCNACGVRFKSGRLVPEYRPASSPTFVL) form a GATA-type zinc finger.

The protein belongs to the type IV zinc-finger family. Class A subfamily. As to expression, mostly expressed in roots. Also expressed in flowers and leaves, and to a lower extent in stems.

The protein localises to the nucleus. Transcriptional activator that specifically binds 5'-GATA-3' or 5'-GAT-3' motifs within gene promoters. May be involved in the regulation of some light-responsive genes. The polypeptide is GATA transcription factor 2 (GATA2) (Arabidopsis thaliana (Mouse-ear cress)).